The chain runs to 446 residues: Transcriptional regulator STERILE APETALA (446 aa).

Residues 1-10 show a composition bias toward low complexity; it reads MSTSSSSSDN. The segment at 1 to 32 is disordered; sequence MSTSSSSSDNGAGGSGGVFEAPSPSRPRRGAN.

Expressed in inflorescence and floral meristems, young floral organ primordia, and later in ovule primordia.

Its subcellular location is the nucleus. In terms of biological role, transcriptional regulator involved in the specification of floral identity. Acts as A class cadastral protein by repressing the C class floral homeotic gene AGAMOUS in the external flower organs in association with APETALA2 and other repressors. Is required to maintain floral meristem identity in concert with AGAMOUS. Also interacts with APETALA2 to ensure the normal development of ovule. This Arabidopsis thaliana (Mouse-ear cress) protein is Transcriptional regulator STERILE APETALA (SAP).